A 709-amino-acid polypeptide reads, in one-letter code: Homeobox-leucine zipper protein TF1 (709 aa).

Positions 66–125 form a DNA-binding region, homeobox; that stretch reads RKRRLQRLTGKQSEVLEGFFSICGHPDDGQKRHLSETTGLGLDQVKFWFQNKRTQVKTMC. The stretch at 166 to 187 forms a coiled coil; the sequence is NQLAVEMERLMGQSEWLQQEIA. The START domain occupies 212-441; it reads GQHDQQMIAE…MARQSARMRD (230 aa).

It belongs to the HD-ZIP homeobox family. Class IV subfamily.

It is found in the nucleus. Its function is as follows. Probable transcription factor. In Oryza sativa subsp. japonica (Rice), this protein is Homeobox-leucine zipper protein TF1 (TF1).